The chain runs to 850 residues: Bifunctional levopimaradiene synthase, chloroplastic (850 aa).

A chloroplast-targeting transit peptide spans 1 to 52 (MALPSSSLSSQIHTGATTQCIPHFHGSLNAGTSAGKRRSLYLRWGKGPSKIV). Lys250 serves as a coordination point for substrate. Mg(2+) is bound by residues Asp383 and Asp385. The short motif at 383-386 (DIDD) is the DXDD motif element. Position 470 (Lys470) interacts with substrate. Residues Asp602, Asp606, Asn746, Thr750, and Glu754 each coordinate Mg(2+). The DDXXD motif signature appears at 602–606 (DDLYD).

It belongs to the terpene synthase family. Tpsd subfamily. The cofactor is Mg(2+). In terms of tissue distribution, expressed in young tissues such as flushing buds and green bark tissues. Lower levels in mature needles and bark.

The protein localises to the plastid. Its subcellular location is the chloroplast. The enzyme catalyses (2E,6E,10E)-geranylgeranyl diphosphate = (+)-copalyl diphosphate. The catalysed reaction is (+)-copalyl diphosphate = abieta-8(14),12-diene + diphosphate. It carries out the reaction (+)-copalyl diphosphate = neoabietadiene + diphosphate. It participates in terpene metabolism; oleoresin biosynthesis. In terms of biological role, involved in defensive oleoresin formation in conifers in response to insect attack or other injury. Involved in diterpene (C20) olefins biosynthesis. Bifunctional enzyme that catalyzes two sequential cyclizations of geranylgeranyl diphosphate (GGPP) to levopimaradiene. Levopimaradiene is the major products of the enzyme followed by abietadiene, neoabietadiene and palustradiene. No activity with geranyl diphosphate (GPP) or farnesyl diphosphate (FPP) as substrate. This chain is Bifunctional levopimaradiene synthase, chloroplastic (LPS), found in Pinus taeda (Loblolly pine).